The sequence spans 279 residues: Tryptophan 2,3-dioxygenase (279 aa).

Substrate contacts are provided by residues Phe48–His52, Tyr110, and Arg114. Residue His237 coordinates heme. Residue Thr251 coordinates substrate.

Belongs to the tryptophan 2,3-dioxygenase family. Homotetramer. The cofactor is heme.

It carries out the reaction L-tryptophan + O2 = N-formyl-L-kynurenine. It participates in amino-acid degradation; L-tryptophan degradation via kynurenine pathway; L-kynurenine from L-tryptophan: step 1/2. Functionally, heme-dependent dioxygenase that catalyzes the oxidative cleavage of the L-tryptophan (L-Trp) pyrrole ring and converts L-tryptophan to N-formyl-L-kynurenine. Catalyzes the oxidative cleavage of the indole moiety. In Bacillus thuringiensis subsp. konkukian (strain 97-27), this protein is Tryptophan 2,3-dioxygenase.